A 209-amino-acid polypeptide reads, in one-letter code: Pyridoxine/pyridoxamine 5'-phosphate oxidase (209 aa).

FMN-binding positions include 57–62 (RMVLLK), 72–73 (YT), K79, and Q101. Substrate is bound at residue K62. The substrate site is built by Y119, R123, and S127. FMN contacts are provided by residues 136-137 (QS) and W181. Residue 187–189 (RLH) participates in substrate binding. R191 contacts FMN.

It belongs to the pyridoxamine 5'-phosphate oxidase family. Homodimer. It depends on FMN as a cofactor.

The catalysed reaction is pyridoxamine 5'-phosphate + O2 + H2O = pyridoxal 5'-phosphate + H2O2 + NH4(+). The enzyme catalyses pyridoxine 5'-phosphate + O2 = pyridoxal 5'-phosphate + H2O2. Its pathway is cofactor metabolism; pyridoxal 5'-phosphate salvage; pyridoxal 5'-phosphate from pyridoxamine 5'-phosphate: step 1/1. The protein operates within cofactor metabolism; pyridoxal 5'-phosphate salvage; pyridoxal 5'-phosphate from pyridoxine 5'-phosphate: step 1/1. Its function is as follows. Catalyzes the oxidation of either pyridoxine 5'-phosphate (PNP) or pyridoxamine 5'-phosphate (PMP) into pyridoxal 5'-phosphate (PLP). The protein is Pyridoxine/pyridoxamine 5'-phosphate oxidase of Chelativorans sp. (strain BNC1).